Here is a 169-residue protein sequence, read N- to C-terminus: MKPSSSNSRSKGHAKARRKTREELDQEARDRKRQKKRRGHAPGSRAAGGNTTSGSKGQNAPKDPRIGSKTPIPLGVIEKVTKQHKPKSEKPMLSPQAELELLETDERLDALLERLEAGETLSAEEQSWVDAKLDRIDELMQKLGLSYDDDEEEEEDEKQEDMMRLLRGN.

2 disordered regions span residues 1-75 and 144-169; these read MKPS…IPLG and GLSYDDDEEEEEDEKQEDMMRLLRGN. Positions 10-19 are enriched in basic residues; it reads SKGHAKARRK. A compositionally biased stretch (basic and acidic residues) spans 20 to 30; that stretch reads TREELDQEARD. A compositionally biased stretch (basic residues) spans 31-40; the sequence is RKRQKKRRGH. A compositionally biased stretch (polar residues) spans 49 to 58; it reads GNTTSGSKGQ. Residues 147 to 159 show a composition bias toward acidic residues; the sequence is YDDDEEEEEDEKQ. Over residues 160–169 the composition is skewed to basic and acidic residues; it reads EDMMRLLRGN.

It belongs to the YihI family. As to quaternary structure, interacts with Der.

A GTPase-activating protein (GAP) that modifies Der/EngA GTPase function. May play a role in ribosome biogenesis. The polypeptide is Der GTPase-activating protein YihI (Escherichia coli (strain 55989 / EAEC)).